Here is a 152-residue protein sequence, read N- to C-terminus: MVKAVAVLGSSEGVKGTIYFVQEGDGPTTVTGSITGLKPGLHGFHVHALGDTTNGCMSTGPHFNPAGKEHGAPEDENRHAGDLGNATAGEDGIVTVSVVDSQIPLSGPNSIIGRAVVVHADPDDLGKGGHELSKTTGNAGGRVACGIIGLQG.

Residues histidine 45, histidine 47, and histidine 62 each coordinate Cu cation. Positions proline 61–threonine 87 are disordered. Zn(2+)-binding residues include histidine 62, histidine 70, histidine 79, and aspartate 82. Over residues glycine 67–glycine 81 the composition is skewed to basic and acidic residues. Histidine 119 lines the Cu cation pocket.

Belongs to the Cu-Zn superoxide dismutase family. In terms of assembly, homodimer. Cu cation is required as a cofactor. It depends on Zn(2+) as a cofactor.

It is found in the cytoplasm. It catalyses the reaction 2 superoxide + 2 H(+) = H2O2 + O2. In terms of biological role, destroys radicals which are normally produced within the cells and which are toxic to biological systems. In Zingiber officinale (Ginger), this protein is Superoxide dismutase [Cu-Zn].